Consider the following 129-residue polypeptide: Flagellar basal body rod protein FlgB (129 aa).

It belongs to the flagella basal body rod proteins family. In terms of assembly, the basal body constitutes a major portion of the flagellar organelle and consists of a number of rings mounted on a central rod. In Gram-negative bacteria, at least four rings, L, P, S and M are present, whereas Gram-positive bacteria lack the L and P rings. The rod consists of about 26 subunits of FlgG in the distal portion, and FlgB, FlgC and FlgF build up the proximal portion of the rod with about 6 subunits each. Rod assembly occurs by export via the flagellum-specific pathway of its constituent proteins and by their incorporation into the rod structure in the probable order of FlgB, FlgC, FlgF and FlgG. Another protein, FliE, also assembles onto the stable rod structure.

It localises to the bacterial flagellum basal body. Its function is as follows. Structural component of flagellum, the bacterial motility apparatus. Part of the rod structure of flagellar basal body. The sequence is that of Flagellar basal body rod protein FlgB (flgB) from Bacillus subtilis (strain 168).